Reading from the N-terminus, the 451-residue chain is ATP synthase subunit beta (451 aa).

143 to 150 (GGAGVGKT) serves as a coordination point for ATP.

It belongs to the ATPase alpha/beta chains family. In terms of assembly, F-type ATPases have 2 components, CF(1) - the catalytic core - and CF(0) - the membrane proton channel. CF(1) has five subunits: alpha(3), beta(3), gamma(1), delta(1), epsilon(1). CF(0) has three main subunits: a(1), b(2) and c(9-12). The alpha and beta chains form an alternating ring which encloses part of the gamma chain. CF(1) is attached to CF(0) by a central stalk formed by the gamma and epsilon chains, while a peripheral stalk is formed by the delta and b chains.

It localises to the cell membrane. It carries out the reaction ATP + H2O + 4 H(+)(in) = ADP + phosphate + 5 H(+)(out). Its function is as follows. Produces ATP from ADP in the presence of a proton gradient across the membrane. The catalytic sites are hosted primarily by the beta subunits. This chain is ATP synthase subunit beta, found in Coprothermobacter proteolyticus (strain ATCC 35245 / DSM 5265 / OCM 4 / BT).